The chain runs to 1997 residues: Otoferlin (1997 aa).

In terms of domain architecture, C2 1 spans 1–98; the sequence is MALIVHLKTV…VEENRVEVTD (98 aa). The Cytoplasmic portion of the chain corresponds to 1–1963; it reads MALIVHLKTV…ARYFLWHTYR (1963 aa). The tract at residues 140–167 is disordered; the sequence is QEEKDSQETDGLLPGSRPSTRISGEKSF. C2 domains follow at residues 235–356 and 399–530; these read KRSK…HKWA and IEGN…FLPT. The disordered stretch occupies residues 643–692; sequence VDGMSRPLRPRPRKEPGDEEEVDLIQNSSDDEGDEAGDLASVSSTPPMRP. The segment covering 659–679 has biased composition (acidic residues); it reads GDEEEVDLIQNSSDDEGDEAG. The stretch at 791-820 forms a coiled coil; that stretch reads RERLKSCMRELESMGQQAKSLRAQVKRHTV. 2 consecutive C2 domains span residues 943–1068 and 1115–1241; these read LHSF…PPRF and RGPI…PNWN. Ca(2+) contacts are provided by aspartate 975, aspartate 981, aspartate 1037, aspartate 1039, and aspartate 1045. Disordered regions lie at residues 1253 to 1272, 1296 to 1326, and 1343 to 1402; these read LRNGGPSSRPTGEVVVSMEP, DVAEDEKERKKKKKKGPSEEPEEEEPDESML, and LRQH…EKKK. 2 stretches are compositionally biased toward acidic residues: residues 1314-1325 and 1352-1361; these read EEPEEEEPDESM and DLEEKEEMES. Basic and acidic residues predominate over residues 1370–1383; it reads KSKEKSRAAKEEKK. 2 C2 domains span residues 1464 to 1593 and 1714 to 1865; these read LPED…ATCG and DMPA…KQCT. The Ca(2+) site is built by aspartate 1508, aspartate 1514, aspartate 1563, aspartate 1565, aspartate 1571, aspartate 1836, serine 1839, and aspartate 1842. The helical transmembrane segment at 1964 to 1984 threads the bilayer; it reads WLLLKFLLLFLLLLLFALFLY. The Extracellular portion of the chain corresponds to 1985-1997; it reads SLPGYLAKKILGA.

It belongs to the ferlin family. Interacts with SNAP25; the interaction is direct. Interacts with STX1; the interaction is direct. Interacts with RAB8B. The cofactor is Ca(2+). Isoform 1 is expressed in cochlea and brain. Expressed in the cochlear and vestibular hair cells. Expressed in both inner and outer hair cells (IHCs and OHCs) and cochlear ganglions neurons at postnatal day 2 (P2) and 6 (P6). Expressed only in IHCs at postnatal day 60 (P60) (at protein level). Strongly expressed in brain and inner ear. In the inner ear, it is mainly expressed in the cochlear IHC and vestibular type I sensory hair cells. Weakly expressed in eye, heart, skeletal muscle, liver, kidney, lung and testis.

Its subcellular location is the cytoplasmic vesicle. It localises to the secretory vesicle. It is found in the synaptic vesicle membrane. The protein localises to the basolateral cell membrane. The protein resides in the endoplasmic reticulum membrane. Its subcellular location is the golgi apparatus membrane. It localises to the presynaptic cell membrane. It is found in the cell membrane. Functionally, key calcium ion sensor involved in the Ca(2+)-triggered synaptic vesicle-plasma membrane fusion and in the control of neurotransmitter release at these output synapses. Interacts in a calcium-dependent manner to the presynaptic SNARE proteins at ribbon synapses of cochlear inner hair cells (IHCs) to trigger exocytosis of neurotransmitter. Also essential to synaptic exocytosis in immature outer hair cells (OHCs). May also play a role within the recycling of endosomes. This chain is Otoferlin (Otof), found in Mus musculus (Mouse).